Reading from the N-terminus, the 214-residue chain is Triosephosphate isomerase (214 aa).

Residue 6 to 8 (NLK) coordinates substrate. H85 serves as the catalytic Electrophile. Residue E133 is the Proton acceptor of the active site. Substrate contacts are provided by residues I138, G173, and 194-195 (AS).

Belongs to the triosephosphate isomerase family. In terms of assembly, homotetramer; dimer of dimers.

Its subcellular location is the cytoplasm. The catalysed reaction is D-glyceraldehyde 3-phosphate = dihydroxyacetone phosphate. It participates in carbohydrate biosynthesis; gluconeogenesis. The protein operates within carbohydrate degradation; glycolysis; D-glyceraldehyde 3-phosphate from glycerone phosphate: step 1/1. Its function is as follows. Involved in the gluconeogenesis. Catalyzes stereospecifically the conversion of dihydroxyacetone phosphate (DHAP) to D-glyceraldehyde-3-phosphate (G3P). This chain is Triosephosphate isomerase, found in Halobacterium salinarum (strain ATCC 700922 / JCM 11081 / NRC-1) (Halobacterium halobium).